We begin with the raw amino-acid sequence, 91 residues long: Cell division topological specificity factor (91 aa).

This sequence belongs to the MinE family.

In terms of biological role, prevents the cell division inhibition by proteins MinC and MinD at internal division sites while permitting inhibition at polar sites. This ensures cell division at the proper site by restricting the formation of a division septum at the midpoint of the long axis of the cell. The chain is Cell division topological specificity factor from Caldanaerobacter subterraneus subsp. tengcongensis (strain DSM 15242 / JCM 11007 / NBRC 100824 / MB4) (Thermoanaerobacter tengcongensis).